The following is a 92-amino-acid chain: Large ribosomal subunit protein bL25 (92 aa).

The protein belongs to the bacterial ribosomal protein bL25 family. In terms of assembly, part of the 50S ribosomal subunit; part of the 5S rRNA/L5/L18/L25 subcomplex. Contacts the 5S rRNA. Binds to the 5S rRNA independently of L5 and L18.

Its function is as follows. This is one of the proteins that binds to the 5S RNA in the ribosome where it forms part of the central protuberance. The chain is Large ribosomal subunit protein bL25 from Photobacterium profundum (strain SS9).